Consider the following 118-residue polypeptide: Pterin-4-alpha-carbinolamine dehydratase (118 aa).

This sequence belongs to the pterin-4-alpha-carbinolamine dehydratase family.

The enzyme catalyses (4aS,6R)-4a-hydroxy-L-erythro-5,6,7,8-tetrahydrobiopterin = (6R)-L-erythro-6,7-dihydrobiopterin + H2O. Functionally, involved in tetrahydrobiopterin biosynthesis. Seems to both prevent the formation of 7-pterins and accelerate the formation of quinonoid-BH2. May also have a positive regulatory role in the expression of phhA. The protein is Pterin-4-alpha-carbinolamine dehydratase (phhB) of Pseudomonas syringae pv. tomato (strain ATCC BAA-871 / DC3000).